We begin with the raw amino-acid sequence, 4017 residues long: Hybrid PKS-NRPS synthetase cghG (4017 aa).

The Ketosynthase family 3 (KS3) domain occupies glutamine 6–serine 438. Residues cysteine 179, histidine 318, and histidine 358 each act as for beta-ketoacyl synthase activity in the active site. The malonyl-CoA:ACP transacylase (MAT) domain stretch occupies residues valine 549–leucine 869. The segment at asparagine 936 to proline 1072 is N-terminal hotdog fold. Residues asparagine 936 to arginine 1243 enclose the PKS/mFAS DH domain. The tract at residues proline 937–alanine 1240 is dehydratase (DH) domain. Catalysis depends on histidine 969, which acts as the Proton acceptor; for dehydratase activity. The segment at leucine 1087–arginine 1243 is C-terminal hotdog fold. The active-site Proton donor; for dehydratase activity is the aspartate 1147. The tract at residues valine 1398–lysine 1585 is methyltransferase (MT) domain. The segment at threonine 2127–residue 2300 is ketoreductase (KR)domain. The 77-residue stretch at alanine 2423–isoleucine 2499 folds into the Carrier 1 domain. Position 2458 is an O-(pantetheine 4'-phosphoryl)serine (serine 2458). Disordered regions lie at residues valine 2547 to arginine 2606 and tryptophan 2613 to histidine 2632. The segment covering serine 2548–threonine 2578 has biased composition (polar residues). The interval arginine 2626–glutamine 3020 is condensation. The segment at glutamate 3053–isoleucine 3453 is adenylation. A disordered region spans residues proline 3567 to threonine 3586. Over residues threonine 3569–threonine 3579 the composition is skewed to low complexity. The Carrier 2 domain occupies glutamine 3583 to glycine 3661. Residues threonine 3588–aspartate 3658 form a thiolation region. O-(pantetheine 4'-phosphoryl)serine is present on serine 3621. The reductase-like stretch occupies residues valine 3696–alanine 3920.

This sequence in the C-terminal section; belongs to the NRP synthetase family.

The enzyme catalyses (2S,4S)-4-hydroxy-4-methylglutamate + 8 malonyl-CoA + 3 S-adenosyl-L-methionine + ATP + 8 NADPH + 11 H(+) = (2S)-3-[(2S)-3,5-dioxo-4-[(2E,4R,6R,8E,10E,12E)-4,6,12-trimethyltetradeca-2,8,10,12-tetraenoyl]pyrrolidin-2-yl]-2-hydroxy-2-methylpropanoate + AMP + 3 S-adenosyl-L-homocysteine + 8 CO2 + diphosphate + 8 NADP(+) + 8 CoA + 6 H2O. It participates in secondary metabolite biosynthesis. Hybrid PKS-NRPS synthetase; part of the gene cluster that mediates the biosynthesis of the tetramic acid Sch210972, a potential anti-HIV fungal natural product that contains a decalin core. The PKS module of cghG together with the enoylreductase cghC catalyze the formation of the polyketide unit which is then conjugated to 4-hydroxyl-4-methyl glutamate (HMG) by the condensation domain of the cghG NRPS module. One unique structural feature of Sch210972 is the tetramic acid motif proposed to be derived from the non-proteinogenic amino acid HMG, by a Dieckmann-type condensation catalyzed by the reductase domain of cghG. The aldolase cghB catalyzes the aldol condensation of 2 molecules of pyruvic acid to yield the intermediate 4-hydroxyl-4-methyl-2-oxoglutarate (HMOG), which can then be stereoselectively transaminated by an unidentified enzyme to form HMG. The Diels-Alderase cghA then uses the Dieckmann product released by cghG as substrate and catalyzes the Diels-Alder cycloaddition to form the decalin ring of Sch210972. CghA also suppresses the nonenzymatic formation of the alternative stereoisomer. This is Hybrid PKS-NRPS synthetase cghG from Chaetomium globosum (strain ATCC 6205 / CBS 148.51 / DSM 1962 / NBRC 6347 / NRRL 1970) (Soil fungus).